Consider the following 107-residue polypeptide: Large ribosomal subunit protein uL24 (107 aa).

This sequence belongs to the universal ribosomal protein uL24 family. In terms of assembly, part of the 50S ribosomal subunit.

Functionally, one of two assembly initiator proteins, it binds directly to the 5'-end of the 23S rRNA, where it nucleates assembly of the 50S subunit. One of the proteins that surrounds the polypeptide exit tunnel on the outside of the subunit. This is Large ribosomal subunit protein uL24 from Solidesulfovibrio magneticus (strain ATCC 700980 / DSM 13731 / RS-1) (Desulfovibrio magneticus).